We begin with the raw amino-acid sequence, 274 residues long: 4-diphosphocytidyl-2-C-methyl-D-erythritol kinase (274 aa).

The active site involves K10. 101–111 (PTQAGLGGGSA) is an ATP binding site. D143 is an active-site residue.

This sequence belongs to the GHMP kinase family. IspE subfamily.

The enzyme catalyses 4-CDP-2-C-methyl-D-erythritol + ATP = 4-CDP-2-C-methyl-D-erythritol 2-phosphate + ADP + H(+). The protein operates within isoprenoid biosynthesis; isopentenyl diphosphate biosynthesis via DXP pathway; isopentenyl diphosphate from 1-deoxy-D-xylulose 5-phosphate: step 3/6. In terms of biological role, catalyzes the phosphorylation of the position 2 hydroxy group of 4-diphosphocytidyl-2C-methyl-D-erythritol. The protein is 4-diphosphocytidyl-2-C-methyl-D-erythritol kinase of Helicobacter pylori (strain J99 / ATCC 700824) (Campylobacter pylori J99).